Consider the following 539-residue polypeptide: MASVEPIKTFEIRQKGPVETKAERKSIRDLNEEELDKLIEAWRWIQDPARTGEDSFFYLAGLHGEPFRGAGYNNSHWWGGYCHHGNILFPTWHRAYLMAVEKALRKACPDVSLPYWDESDDETAKKGIPLIFTQKEYKGKPNPLYSYTFSERIVDRLAKFPDADYSKPQGYKTCRYPYSGLCGQDDIAIAQQHNNFLDANFNQEQITGLLNSNVTSWLNLGQFTDIEGKQVKADTRWKIRQCLLTEEYTVFSNTTSAQRWNDEQFHPLESGGKETEAKATSLAVPLESPHNDMHLAIGGVQIPGFNVDQYAGANGDMGENDTASFDPIFYFHHCFIDYLFWTWQTMHKKTDASQITILPEYPGTNSVDSQGPTPGISGNTWLTLDTPLDPFRENGDKVTSNKLLTLKDLPYTYKAPTSGTGSVFNDVPRLNYPLSPPILRVSGINRASIAGSFALAISQTDHTGKAQVKGIESVLSRWHVQGCANCQTHLSTTAFVPLFELNEDDAKRKHANNELAVHLHTRGNPGGQRVRNVTVGTMR.

6 residues coordinate Cu cation: His-63, His-84, His-93, His-290, His-294, and His-333. The segment at residues 82–84 (CHH) is a cross-link (2'-(S-cysteinyl)-histidine (Cys-His)).

The protein belongs to the tyrosinase family. Homotetramer. Cu(2+) serves as cofactor. In terms of processing, the N-terminus is blocked.

It catalyses the reaction 2 L-dopa + O2 = 2 L-dopaquinone + 2 H2O. It carries out the reaction L-tyrosine + O2 = L-dopaquinone + H2O. With respect to regulation, activated by acidifying treatment at pH 3.0. Functionally, this is a copper-containing oxidase that functions in the formation of pigments such as melanins and other polyphenolic compounds. The protein is Tyrosinase (melO) of Aspergillus oryzae (strain ATCC 42149 / RIB 40) (Yellow koji mold).